Consider the following 710-residue polypeptide: Probable GTP diphosphokinase RSH2, chloroplastic (710 aa).

A chloroplast-targeting transit peptide spans 1 to 63 (MVVATTIALY…SSLFSSASVK (63 aa)). The HD domain occupies 233–337 (YLQHCVETAM…IKLADRLHNM (105 aa)).

The protein belongs to the RelA/SpoT family.

It localises to the plastid. Its subcellular location is the chloroplast. It carries out the reaction GTP + ATP = guanosine 3'-diphosphate 5'-triphosphate + AMP. Probable ppGpp (guanosine 3'-diphosphate 5'-diphosphate) synthetase that may be involved in a rapid plant ppGpp-mediated response to pathogens and other stresses. This Arabidopsis thaliana (Mouse-ear cress) protein is Probable GTP diphosphokinase RSH2, chloroplastic (RSH2).